The sequence spans 47 residues: uncharacterized protein (47 aa).

Disordered regions lie at residues 1 to 20 (MSTD…EEWQ) and 25 to 47 (EKEK…NRKG). Basic and acidic residues predominate over residues 25-40 (EKEKDENNRLFQEQKQ).

This is an uncharacterized protein from Dictyostelium discoideum (Social amoeba).